Consider the following 425-residue polypeptide: Formyl-CoA:oxalate CoA-transferase (425 aa).

Residues 17 to 18 (QS), Arg38, 72 to 75 (LDTK), 96 to 98 (NFG), Arg104, and 136 to 139 (KVYE) contribute to the CoA site. Asp168 (nucleophile) is an active-site residue. A substrate-binding site is contributed by 247–249 (GGQ).

This sequence belongs to the CoA-transferase III family. Frc subfamily. In terms of assembly, homodimer.

It catalyses the reaction formyl-CoA + oxalate = oxalyl-CoA + formate. The protein operates within metabolic intermediate degradation; oxalate degradation; CO(2) and formate from oxalate: step 1/2. Its function is as follows. Involved in the catabolism of oxalate and in the adapatation to low pH via the induction of the oxalate-dependent acid tolerance response (ATR). Catalyzes the transfer of the CoA moiety from formyl-CoA to oxalate. In Rhodopseudomonas palustris (strain ATCC BAA-98 / CGA009), this protein is Formyl-CoA:oxalate CoA-transferase.